We begin with the raw amino-acid sequence, 420 residues long: Alpha-ketoglutarate-dependent xanthine dioxygenase xan-1 (420 aa).

Fe cation contacts are provided by His-157 and Asp-159. 2-oxoglutarate is bound by residues Thr-206 and Trp-336. His-351 serves as a coordination point for Fe cation. Residue Arg-366 coordinates 2-oxoglutarate. Substrate is bound at residue Arg-366.

The protein belongs to the TfdA dioxygenase family. Fe(2+) is required as a cofactor.

Its subcellular location is the cytoplasm. The protein resides in the cytosol. It carries out the reaction xanthine + 2-oxoglutarate + O2 = urate + succinate + CO2. Its function is as follows. Alpha-ketoglutarate-dependent xanthine dioxygenase is a non-heme mononuclear Fe(2+) enzyme that decarboxylates alpha-ketoglutarate to succinate and CO(2) while hydroxylating xanthine to generate uric acid. Allows xanthine utilization as a nitrogen source. The chain is Alpha-ketoglutarate-dependent xanthine dioxygenase xan-1 from Neurospora crassa (strain ATCC 24698 / 74-OR23-1A / CBS 708.71 / DSM 1257 / FGSC 987).